Here is a 263-residue protein sequence, read N- to C-terminus: MARGPKKHLKRVAAPKHWMLDKLTGVFAPRPSTGPHKLRECLPLIIFLRNRLKYALTGDEVKKICMQRFIKIDGKVRTDITYPAGFMDVISIEKTGEHFRLVYDTKGRFAVHRITSEEAKYKLCKVRKTWVGTKGIPHLVTHDARTIRYPDPLIKVNDTIQIDLETGKITDFIKFDTGNLCMVTGGANLGRIGVITNRERHPGSFDVVHVKDANGNNFATRLSNIFVIGKGNKPWISLPRGKGIRLTIAEERDKRLAAKQSSG.

The S4 RNA-binding domain occupies 42 to 104 (LPLIIFLRNR…TGEHFRLVYD (63 aa)).

The protein belongs to the eukaryotic ribosomal protein eS4 family. In terms of assembly, component of the small ribosomal subunit.

It is found in the cytoplasm. Functionally, component of the small ribosomal subunit. The ribosome is a large ribonucleoprotein complex responsible for the synthesis of proteins in the cell. The chain is Small ribosomal subunit protein eS4 (rps4) from Xenopus laevis (African clawed frog).